A 208-amino-acid polypeptide reads, in one-letter code: Heat shock protein 26 (208 aa).

A phosphoserine mark is found at Ser44, Ser52, and Ser58. In terms of domain architecture, sHSP spans 71 to 179 (ANRNDIHWPA…KSKERIIQIQ (109 aa)). Positions 187 to 208 (NVKANESEVKGKENGAPNGKDK) are disordered. The span at 191–208 (NESEVKGKENGAPNGKDK) shows a compositional bias: basic and acidic residues.

This sequence belongs to the small heat shock protein (HSP20) family.

This is Heat shock protein 26 (Hsp26) from Drosophila melanogaster (Fruit fly).